Here is a 9159-residue protein sequence, read N- to C-terminus: Halomucin (9159 aa).

Positions 1-30 are cleaved as a signal peptide; that stretch reads MSQTAKPIFAVVVALIVLISGVAFIGSVSA. C-type lectin domains follow at residues 644-776 and 929-1060; these read TTGN…YLVE and YDGH…VEYG. Residues 1310–1332 show a composition bias toward polar residues; the sequence is QPQTVNDPDAVSTRNNNVGSNGL. Positions 1310 to 1351 are disordered; sequence QPQTVNDPDAVSTRNNNVGSNGLDSKIEDDQNNGADGNPHGT. Residues 1756-3380 form a V-G-G-L motif-rich region region; the sequence is VGGLIGESSG…GFNGEHVGGL (1625 aa). Disordered regions lie at residues 3484–3514, 4878–4912, 6570–6589, 7047–7097, 7660–7702, 7888–7923, 8212–8237, and 8369–8614; these read GATAQSDATGSGTPGGATGYGSVGDTTPAPQ, ESYWDKGATDKSDATGSDTPATVSGYGSVGDTTPA, TDSATGSSVGGLIGSQSSGQ, TPTV…GINT, ATDS…NPGG, IDGDGLADDNEATGVPTDNDDDNDGIPDDEDQEPAL, STQQKRVGPLVSEDPSTVSWPSGAAD, and DSTA…GSST. Residues 3495–3505 show a composition bias toward gly residues; sequence GTPGGATGYGS. The span at 4880–4890 shows a compositional bias: basic and acidic residues; the sequence is YWDKGATDKSD. Composition is skewed to polar residues over residues 7048-7057 and 7068-7078; these read PTVTINSSSD and GEDSTSSNESS. Residues 7079-7092 show a composition bias toward acidic residues; that stretch reads DGTESDQGDPEDDI. The segment covering 7681–7698 has biased composition (polar residues); that stretch reads VTGSTPTFVSSGTVTTPE. In terms of domain architecture, Cadherin spans 7686 to 7793; it reads PTFVSSGTVT…ITDVDEQPTG (108 aa). 2 stretches are compositionally biased toward acidic residues: residues 7888–7898 and 7905–7920; these read IDGDGLADDNE and DNDDDNDGIPDDEDQE. A compositionally biased stretch (acidic residues) spans 8378-8390; it reads ALEDDSSNQDSGD. 2 stretches are compositionally biased toward low complexity: residues 8391 to 8529 and 8538 to 8548; these read DSSN…SSQN and SAAAVGAESGS. Gly residues-rich tracts occupy residues 8549–8566 and 8574–8608; these read EMGGETGGESQAGGGDGS and AGGGSSGGSSSGDSGGSSSGNSGGSSSGNSGGSSS.

Post-translationally, probably glycosylated with sugar containing sialic acid. This may further contribute to its overall negative charge, thereby creating an aqueous shield covering the cells.

The protein localises to the secreted. May protect the organism from desiccation stress. May also contribute to the rigidity and maintenance of the unique square cell morphology of H.walsbyi. This Haloquadratum walsbyi (strain DSM 16790 / HBSQ001) protein is Halomucin (hmu).